The chain runs to 358 residues: Neutral protease 2 homolog PABG_02362 (358 aa).

Residues 1 to 19 form the signal peptide; that stretch reads MRRVSGILAVAAFTISAFA. A propeptide spanning residues 20-182 is cleaved from the precursor; that stretch reads GVIQPVAKDA…FAAMNQFVKI (163 aa). Intrachain disulfides connect Cys-188–Cys-259 and Cys-266–Cys-284. N-linked (GlcNAc...) asparagine glycosylation is present at Asn-249. Residue His-309 participates in Zn(2+) binding. Glu-310 is a catalytic residue. 2 residues coordinate Zn(2+): His-313 and Asp-324.

The protein belongs to the peptidase M35 family. The cofactor is Zn(2+).

The protein localises to the secreted. The enzyme catalyses Preferential cleavage of bonds with hydrophobic residues in P1'. Also 3-Asn-|-Gln-4 and 8-Gly-|-Ser-9 bonds in insulin B chain.. In terms of biological role, secreted metalloproteinase that allows assimilation of proteinaceous substrates. Shows high activities on basic nuclear substrates such as histone and protamine. This is Neutral protease 2 homolog PABG_02362 from Paracoccidioides brasiliensis (strain Pb03).